A 31-amino-acid chain; its full sequence is Photosystem II reaction center protein T (31 aa).

Residues 3 to 23 (SFAYILILTLAIATLFFAIAF) traverse the membrane as a helical segment.

It belongs to the PsbT family. As to quaternary structure, PSII is composed of 1 copy each of membrane proteins PsbA, PsbB, PsbC, PsbD, PsbE, PsbF, PsbH, PsbI, PsbJ, PsbK, PsbL, PsbM, PsbT, PsbX, PsbY, PsbZ, Psb30/Ycf12, peripheral proteins PsbO, CyanoQ (PsbQ), PsbU, PsbV and a large number of cofactors. It forms dimeric complexes.

Its subcellular location is the cellular thylakoid membrane. Found at the monomer-monomer interface of the photosystem II (PS II) dimer, plays a role in assembly and dimerization of PSII. PSII is a light-driven water plastoquinone oxidoreductase, using light energy to abstract electrons from H(2)O, generating a proton gradient subsequently used for ATP formation. This Synechococcus sp. (strain WH7803) protein is Photosystem II reaction center protein T.